The chain runs to 214 residues: Thymidylate kinase (214 aa).

14–21 (GLEGAGKT) lines the ATP pocket.

Belongs to the thymidylate kinase family.

The catalysed reaction is dTMP + ATP = dTDP + ADP. Its function is as follows. Phosphorylation of dTMP to form dTDP in both de novo and salvage pathways of dTTP synthesis. This chain is Thymidylate kinase, found in Mannheimia succiniciproducens (strain KCTC 0769BP / MBEL55E).